Reading from the N-terminus, the 43-residue chain is Thaumatin-like protein 1 (43 aa).

The protein belongs to the thaumatin family.

In Glebionis coronaria (Crown daisy), this protein is Thaumatin-like protein 1.